We begin with the raw amino-acid sequence, 248 residues long: Ras-like protein family member 11B (248 aa).

The tract at residues 30 to 248 is small GTPase-like; sequence ASSRVIKIAV…SSKVRTATSV (219 aa). GTP is bound by residues 41 to 48, 88 to 99, and 153 to 156; these read GGSGVGKT, DTPGVQINEQNL, and NKAD. The disordered stretch occupies residues 206-228; the sequence is QNTGTSERRKNSIIPRPKSPNMQ.

The protein belongs to the small GTPase superfamily. Ras family.

The enzyme catalyses GTP + H2O = GDP + phosphate + H(+). The sequence is that of Ras-like protein family member 11B from Xenopus laevis (African clawed frog).